The chain runs to 383 residues: Acetylornithine deacetylase (383 aa).

His80 is a binding site for Zn(2+). The active site involves Asp82. Position 112 (Asp112) interacts with Zn(2+). The active site involves Glu144. Zn(2+) is bound by residues Glu145, Glu169, and His355.

Belongs to the peptidase M20A family. ArgE subfamily. As to quaternary structure, homodimer. The cofactor is Zn(2+). Co(2+) serves as cofactor. Requires glutathione as cofactor.

The protein resides in the cytoplasm. It catalyses the reaction N(2)-acetyl-L-ornithine + H2O = L-ornithine + acetate. Its pathway is amino-acid biosynthesis; L-arginine biosynthesis; L-ornithine from N(2)-acetyl-L-ornithine (linear): step 1/1. Catalyzes the hydrolysis of the amide bond of N(2)-acetylated L-amino acids. Cleaves the acetyl group from N-acetyl-L-ornithine to form L-ornithine, an intermediate in L-arginine biosynthesis pathway, and a branchpoint in the synthesis of polyamines. This chain is Acetylornithine deacetylase, found in Escherichia coli O7:K1 (strain IAI39 / ExPEC).